We begin with the raw amino-acid sequence, 155 residues long: Cardioactive peptide (155 aa).

The N-terminal stretch at 1-23 (MRTSMRISLRLLALLACAICSQA) is a signal peptide. A propeptide spanning residues 24–49 (SLERENNEGTNMANHKLSGVIQWKYE) is cleaved from the precursor. A disulfide bond links Cys-54 and Cys-60. A Cysteine amide modification is found at Cys-60. A propeptide spanning residues 64–155 (RTYPSYPPFS…MQQLEERESK (92 aa)) is cleaved from the precursor. Positions 135 to 155 (NKQKMLQNEKEMQQLEERESK) are disordered. The segment covering 141 to 155 (QNEKEMQQLEERESK) has biased composition (basic and acidic residues).

In terms of tissue distribution, central nervous system; most neurons exhibit coexpression with Burs.

It is found in the secreted. Cardioregulatory neurohormone that increases heart beat rate during adult wing inflation; has no effect on beat amplitude. The effect of CCAP is both ino- and chronotropic. The polypeptide is Cardioactive peptide (Drosophila melanogaster (Fruit fly)).